The chain runs to 921 residues: Isoleucine--tRNA ligase 1 (921 aa).

The 'HIGH' region signature appears at 57–67 (PYANGDIHMGH). E552 lines the L-isoleucyl-5'-AMP pocket. Positions 593–597 (KMSKS) match the 'KMSKS' region motif. K596 contacts ATP. Residues C888, C891, C908, and C911 each contribute to the Zn(2+) site.

The protein belongs to the class-I aminoacyl-tRNA synthetase family. IleS type 1 subfamily. In terms of assembly, monomer. Requires Zn(2+) as cofactor.

The protein resides in the cytoplasm. The catalysed reaction is tRNA(Ile) + L-isoleucine + ATP = L-isoleucyl-tRNA(Ile) + AMP + diphosphate. Functionally, catalyzes the attachment of isoleucine to tRNA(Ile). As IleRS can inadvertently accommodate and process structurally similar amino acids such as valine, to avoid such errors it has two additional distinct tRNA(Ile)-dependent editing activities. One activity is designated as 'pretransfer' editing and involves the hydrolysis of activated Val-AMP. The other activity is designated 'posttransfer' editing and involves deacylation of mischarged Val-tRNA(Ile). The protein is Isoleucine--tRNA ligase 1 of Bacillus cereus (strain ZK / E33L).